Here is a 317-residue protein sequence, read N- to C-terminus: Beta-ketoacyl-[acyl-carrier-protein] synthase III (317 aa).

Active-site residues include cysteine 112 and histidine 244. The interval 245–249 (QANLR) is ACP-binding. Residue asparagine 274 is part of the active site.

Belongs to the thiolase-like superfamily. FabH family. In terms of assembly, homodimer.

It localises to the cytoplasm. The enzyme catalyses malonyl-[ACP] + acetyl-CoA + H(+) = 3-oxobutanoyl-[ACP] + CO2 + CoA. It functions in the pathway lipid metabolism; fatty acid biosynthesis. In terms of biological role, catalyzes the condensation reaction of fatty acid synthesis by the addition to an acyl acceptor of two carbons from malonyl-ACP. Catalyzes the first condensation reaction which initiates fatty acid synthesis and may therefore play a role in governing the total rate of fatty acid production. Possesses both acetoacetyl-ACP synthase and acetyl transacylase activities. Its substrate specificity determines the biosynthesis of branched-chain and/or straight-chain of fatty acids. This is Beta-ketoacyl-[acyl-carrier-protein] synthase III from Citrobacter koseri (strain ATCC BAA-895 / CDC 4225-83 / SGSC4696).